Consider the following 415-residue polypeptide: Serine hydroxymethyltransferase (415 aa).

(6S)-5,6,7,8-tetrahydrofolate-binding positions include leucine 121 and 125-127; that span reads GHL. An N6-(pyridoxal phosphate)lysine modification is found at lysine 230.

The protein belongs to the SHMT family. Homodimer. Pyridoxal 5'-phosphate serves as cofactor.

It is found in the cytoplasm. It catalyses the reaction (6R)-5,10-methylene-5,6,7,8-tetrahydrofolate + glycine + H2O = (6S)-5,6,7,8-tetrahydrofolate + L-serine. Its pathway is one-carbon metabolism; tetrahydrofolate interconversion. It participates in amino-acid biosynthesis; glycine biosynthesis; glycine from L-serine: step 1/1. Functionally, catalyzes the reversible interconversion of serine and glycine with tetrahydrofolate (THF) serving as the one-carbon carrier. This reaction serves as the major source of one-carbon groups required for the biosynthesis of purines, thymidylate, methionine, and other important biomolecules. Also exhibits THF-independent aldolase activity toward beta-hydroxyamino acids, producing glycine and aldehydes, via a retro-aldol mechanism. This chain is Serine hydroxymethyltransferase, found in Syntrophomonas wolfei subsp. wolfei (strain DSM 2245B / Goettingen).